The sequence spans 215 residues: 3-isopropylmalate dehydratase small subunit (215 aa).

It belongs to the LeuD family. LeuD type 1 subfamily. As to quaternary structure, heterodimer of LeuC and LeuD.

It catalyses the reaction (2R,3S)-3-isopropylmalate = (2S)-2-isopropylmalate. It functions in the pathway amino-acid biosynthesis; L-leucine biosynthesis; L-leucine from 3-methyl-2-oxobutanoate: step 2/4. Catalyzes the isomerization between 2-isopropylmalate and 3-isopropylmalate, via the formation of 2-isopropylmaleate. The polypeptide is 3-isopropylmalate dehydratase small subunit (Acinetobacter baumannii (strain AB307-0294)).